The sequence spans 138 residues: 1,4-dihydroxy-2-naphthoyl-CoA hydrolase (138 aa).

Asp13 is an active-site residue.

This sequence belongs to the 4-hydroxybenzoyl-CoA thioesterase family. DHNA-CoA hydrolase subfamily.

It catalyses the reaction 1,4-dihydroxy-2-naphthoyl-CoA + H2O = 1,4-dihydroxy-2-naphthoate + CoA + H(+). Its pathway is cofactor biosynthesis; phylloquinone biosynthesis. It participates in quinol/quinone metabolism; 1,4-dihydroxy-2-naphthoate biosynthesis; 1,4-dihydroxy-2-naphthoate from chorismate: step 7/7. In terms of biological role, catalyzes the hydrolysis of 1,4-dihydroxy-2-naphthoyl-CoA (DHNA-CoA) to 1,4-dihydroxy-2-naphthoate (DHNA), a reaction involved in phylloquinone (vitamin K1) biosynthesis. The chain is 1,4-dihydroxy-2-naphthoyl-CoA hydrolase from Microcystis aeruginosa (strain NIES-843 / IAM M-2473).